The sequence spans 264 residues: Cysteine-rich repeat secretory protein 26 (264 aa).

A signal peptide spans 1–27 (MSSNIFGSVPILVVVAIQLLLVHNVSS). Gnk2-homologous domains lie at 34 to 142 (YLNH…SVDS) and 148 to 261 (YKRM…LYPF).

Belongs to the cysteine-rich repeat secretory protein family.

Its subcellular location is the secreted. The chain is Cysteine-rich repeat secretory protein 26 (CRRSP26) from Arabidopsis thaliana (Mouse-ear cress).